The following is a 312-amino-acid chain: Olfactory receptor 1D2 (312 aa).

The Extracellular segment spans residues 1–25 (MDGGNQSEGSEFLLLGMSESPEQQQ). An N-linked (GlcNAc...) asparagine glycan is attached at Asn-5. Residues 26-49 (ILFWMFLSMYLVTVVGNVLIILAI) traverse the membrane as a helical segment. Over 50–57 (NSDSHLHT) the chain is Cytoplasmic. A helical membrane pass occupies residues 58-79 (PMYFFLANLSFTDLFFVTNTIP). Over 80-100 (KMLVNLQSQNKAISYAGCLTQ) the chain is Extracellular. Cys-97 and Cys-189 are joined by a disulfide. The helical transmembrane segment at 101–120 (LYFLVSLVALDNLILAVMAY) threads the bilayer. The Cytoplasmic segment spans residues 121–139 (DRYVAICCPLHYTTAMSPK). A helical transmembrane segment spans residues 140–158 (LCILLLSLCWVLSVLYGLI). At 159 to 196 (HTILMTRVTFCGSRKIHYIFCEMYVLLRMACSNIQINH) the chain is on the extracellular side. A glycan (N-linked (GlcNAc...) asparagine) is linked at Asn-195. Residues 197-219 (TVLIATGCFIFLIPFGFVIISYV) form a helical membrane-spanning segment. Residues 220–236 (LIIRAILRIPSVSKKYK) are Cytoplasmic-facing. Residues 237–259 (AFSTCASHLGAVSLFYGTLCMVY) traverse the membrane as a helical segment. The Extracellular segment spans residues 260-271 (LKPLHTFSVKDS). Residues 272–291 (VATVMYAVVTPMMNPFIYSL) form a helical membrane-spanning segment. Residues 292 to 312 (RNKDMHGALGRLLDTHFKRLT) are Cytoplasmic-facing.

This sequence belongs to the G-protein coupled receptor 1 family.

The protein localises to the cell membrane. Odorant receptor. In Gorilla gorilla gorilla (Western lowland gorilla), this protein is Olfactory receptor 1D2 (OR1D2).